A 416-amino-acid chain; its full sequence is PRKCA-binding protein (416 aa).

The region spanning 22–105 is the PDZ domain; that stretch reads KVTLQKDAQN…EVTIHYNKLQ (84 aa). Zn(2+) contacts are provided by cysteine 44 and cysteine 46. At threonine 82 the chain carries Phosphothreonine. Positions 144–357 constitute an AH domain; that stretch reads LCNDGLVKRL…CYAVLQDADV (214 aa). The disordered stretch occupies residues 373 to 416; sequence PNQGSFTDGEEEDEEEEDGAAREVSKDACGATGPTDKGGSWCDS. The span at 380 to 390 shows a compositional bias: acidic residues; the sequence is DGEEEDEEEED. Cysteine 414 is lipidated: S-palmitoyl cysteine; by DHHC8.

In terms of assembly, monomer and homodimer. Interacts with CXADR. Interacts presynaptically with the glutamate receptors GRIA2, GRIA3, GRIK3, isoform 3 of GRIA4, isoform A of GRM4, GRM7 and GRM8; with NAPA and NAPB; and with BTG2. The interaction with NAPA and NAPB disrupts the interaction with GRIA2, conducting to the internalization of GRIA2. Interacts with PRKCA; with the amine transporters SLC6A2 and SLC6A3; with the channels ASIC1 and ASIC2; with the GTP-binding proteins ARF1 and ARF3; with the ephrin receptor tyrosine kinases EPHA7, EPHB1 and EPHB2; with ERBB2 and through its PDZ domain with the C-terminal tail of PRLHR. Interacts with UNC5A. Interacts (via AH domain) with NCS1/FREQ; in a calcium-dependent manner. Interacts with F-actin and associates with the ARP2/3 complex. Interacts (via PDZ domain) with ARF1 (activated); the interaction blocks Arp2/3 complex inhibition. Interacts with SORCS3. In terms of processing, phosphorylation at Thr-82 appears to inhibit the interaction with AMPA receptors. Phosphorylated on tyrosine residues by EPHB2 and on serine or threonine residues by PKC. Palmitoylation on Cys-414 is essential for long-term synaptic depression (LTD). Expressed in all tissues examined, with highest levels in brain and testes and lowest levels in lung.

It is found in the cytoplasm. The protein localises to the perinuclear region. It localises to the membrane. Its subcellular location is the postsynaptic density. The protein resides in the synapse. It is found in the synaptosome. The protein localises to the cytoskeleton. Functionally, probable adapter protein that bind to and organize the subcellular localization of a variety of membrane proteins containing some PDZ recognition sequence. Involved in the clustering of various receptors, possibly by acting at the receptor internalization level. Plays a role in synaptic plasticity by regulating the trafficking and internalization of AMPA receptors. May be regulated upon PRKCA activation. May regulate ASIC1/ASIC3 channel. Regulates actin polymerization by inhibiting the actin-nucleating activity of the Arp2/3 complex; the function is competitive with nucleation promoting factors and is linked to neuronal morphology regulation and AMPA receptor (AMPAR) endocytosis. Via interaction with the Arp2/3 complex involved in regulation of synaptic plasicity of excitatory synapses and required for spine shrinkage during long-term depression (LTD). Involved in regulation of astrocyte morphology, antagonistic to Arp2/3 complex activator WASL/N-WASP function. The protein is PRKCA-binding protein (Pick1) of Mus musculus (Mouse).